A 325-amino-acid chain; its full sequence is Holliday junction branch migration complex subunit RuvB (325 aa).

The segment at 1-180 (MKNQLLDAKV…FGIHLKLNFY (180 aa)) is large ATPase domain (RuvB-L). Residues L19, R20, G61, K64, T65, S66, 127-129 (EDF), R170, Y180, and R217 contribute to the ATP site. A Mg(2+)-binding site is contributed by T65. A small ATPAse domain (RuvB-S) region spans residues 181–251 (SCEELTQIVE…ITDYALNQLG (71 aa)). The interval 254-325 (KLGLDSSDHK…ITANALKHLH (72 aa)) is head domain (RuvB-H). The DNA site is built by R290, R309, and R314.

The protein belongs to the RuvB family. In terms of assembly, homohexamer. Forms an RuvA(8)-RuvB(12)-Holliday junction (HJ) complex. HJ DNA is sandwiched between 2 RuvA tetramers; dsDNA enters through RuvA and exits via RuvB. An RuvB hexamer assembles on each DNA strand where it exits the tetramer. Each RuvB hexamer is contacted by two RuvA subunits (via domain III) on 2 adjacent RuvB subunits; this complex drives branch migration. In the full resolvosome a probable DNA-RuvA(4)-RuvB(12)-RuvC(2) complex forms which resolves the HJ.

It is found in the cytoplasm. The enzyme catalyses ATP + H2O = ADP + phosphate + H(+). The RuvA-RuvB-RuvC complex processes Holliday junction (HJ) DNA during genetic recombination and DNA repair, while the RuvA-RuvB complex plays an important role in the rescue of blocked DNA replication forks via replication fork reversal (RFR). RuvA specifically binds to HJ cruciform DNA, conferring on it an open structure. The RuvB hexamer acts as an ATP-dependent pump, pulling dsDNA into and through the RuvAB complex. RuvB forms 2 homohexamers on either side of HJ DNA bound by 1 or 2 RuvA tetramers; 4 subunits per hexamer contact DNA at a time. Coordinated motions by a converter formed by DNA-disengaged RuvB subunits stimulates ATP hydrolysis and nucleotide exchange. Immobilization of the converter enables RuvB to convert the ATP-contained energy into a lever motion, pulling 2 nucleotides of DNA out of the RuvA tetramer per ATP hydrolyzed, thus driving DNA branch migration. The RuvB motors rotate together with the DNA substrate, which together with the progressing nucleotide cycle form the mechanistic basis for DNA recombination by continuous HJ branch migration. Branch migration allows RuvC to scan DNA until it finds its consensus sequence, where it cleaves and resolves cruciform DNA. This chain is Holliday junction branch migration complex subunit RuvB, found in Orientia tsutsugamushi (strain Boryong) (Rickettsia tsutsugamushi).